We begin with the raw amino-acid sequence, 386 residues long: NADH-ubiquinone oxidoreductase chain 4 (386 aa).

Transmembrane regions (helical) follow at residues 8–28, 37–57, 61–81, 91–111, 133–153, 167–187, 189–209, 219–239, 247–267, 283–303, and 315–335; these read SEFHLEWGITLLTLNFSYFLF, WPLSYSTILVSLFVLLWLTFT, FILFYVFFECSLIPTIILILG, ASYYFLFYTLLSSLPLLFIII, IFLLAILSFLVKLPVYFAHIW, MVLAAILLKLGGYGLYLVQVL, IYSETTLMGVCLMGGIFSCLI, LIAYSSVAHMSFVILGMLMSC, ILMMVSHGICSSGLFYLSYLF, ISLFPYLCFWWLSLSFLNMGL, and FFIGAFSLDWMVVGLSGILCF.

Belongs to the complex I subunit 4 family.

It is found in the mitochondrion membrane. The catalysed reaction is a ubiquinone + NADH + 5 H(+)(in) = a ubiquinol + NAD(+) + 4 H(+)(out). Core subunit of the mitochondrial membrane respiratory chain NADH dehydrogenase (Complex I) that is believed to belong to the minimal assembly required for catalysis. Complex I functions in the transfer of electrons from NADH to the respiratory chain. The immediate electron acceptor for the enzyme is believed to be ubiquinone. This Artemia franciscana (Brine shrimp) protein is NADH-ubiquinone oxidoreductase chain 4 (ND4).